The primary structure comprises 382 residues: Bestrophin-6 (382 aa).

4 consecutive transmembrane segments (helical) span residues 29-49 (WKLI…VLAI), 68-88 (FINF…TTIV), 231-251 (LAYP…CAFA), and 265-285 (VIHY…MGWL).

The protein belongs to the anion channel-forming bestrophin (TC 1.A.46) family. Calcium-sensitive chloride channel subfamily.

The protein resides in the membrane. This is Bestrophin-6 (best-6) from Caenorhabditis elegans.